We begin with the raw amino-acid sequence, 113 residues long: U11-theraphotoxin-Hhn1s (113 aa).

An N-terminal signal peptide occupies residues 1 to 21 (MNTVRVTFLLVFVLAVSLGQA). The propeptide occupies 22–74 (DKDENRMEMQEKTEQGKSYLDFAENLLLQKLEELEAKLLEEDSEESRNSRQKR). A disordered region spans residues 61–83 (EEDSEESRNSRQKRCIGEGVPCD). 3 disulfides stabilise this stretch: Cys-75–Cys-90, Cys-82–Cys-95, and Cys-89–Cys-110.

It belongs to the neurotoxin 14 (magi-1) family. 01 (HNTX-16) subfamily. Expressed by the venom gland.

The protein localises to the secreted. Its function is as follows. Probable ion channel inhibitor. The chain is U11-theraphotoxin-Hhn1s from Cyriopagopus hainanus (Chinese bird spider).